The sequence spans 446 residues: Ribosome biogenesis protein WDR12 homolog (446 aa).

The segment at 21–105 (VQITFFSKDK…ETILKIECII (85 aa)) is ubiquitin-like (UBL) domain. WD repeat units follow at residues 171 to 211 (KCSG…LVEK) and 216 to 255 (GHERAVECVSVNSDATRAISGSVDTNLKVWNLDPSDEATI). The segment at 256–275 (YEKEEEESSAKKKRKKDTRT) is disordered. WD repeat units lie at residues 284–324 (GHRD…EVSR), 326–365 (KGPKSFTSIDIHPTSNLLISSCTDAIPRLYDPKNRDGAMV), 371–412 (GHQN…SSLF), and 416–446 (GHEDRILCAAWNEGLIATGSADCSIKIFETS).

It belongs to the WD repeat WDR12/YTM1 family.

Its subcellular location is the nucleus. It is found in the nucleolus. The protein localises to the nucleoplasm. Its function is as follows. Required for maturation of ribosomal RNAs and formation of the large ribosomal subunit. This Caenorhabditis briggsae protein is Ribosome biogenesis protein WDR12 homolog.